The following is a 408-amino-acid chain: tRNA pseudouridine synthase D (408 aa).

Asp76 serves as the catalytic Nucleophile. A TRUD domain is found at 149–362 (GFINYYDSQR…NSFERKVRIL (214 aa)).

The protein belongs to the pseudouridine synthase TruD family.

It carries out the reaction uridine(13) in tRNA = pseudouridine(13) in tRNA. In terms of biological role, responsible for synthesis of pseudouridine from uracil-13 in transfer RNAs. The chain is tRNA pseudouridine synthase D from Leptospira interrogans serogroup Icterohaemorrhagiae serovar Lai (strain 56601).